A 345-amino-acid chain; its full sequence is MSTDPDEREVSPALTVGDGDVDVSLRPRSLREFIGQPRVREQLQLVIQGAKNRGGTPDHILLSGPPGLGKTSLAVIIAAELGSSLRMTSGPALERAGDLAAMLSNLVEHDVLFIDEIHRIARPAEEMLYLAMEDFRVDVVVGKGPGATSIPLDVAPFTLVGATTRSGALTGPLRDRFGFTAHMDFYEPAELERVLVRSAGILGIQLGADAGAEIARRSRGTPRIANRLLRRVRDFAEVRADGVITRDVAKAALAVYDVDELGLDRLDRAVLSALTRSFSGGPVGVSTLAVAVGEEASTVEEVCEPFLVRAGMVARTPRGRVATALAWTHLGMTPPAGANQPGLFE.

Residues 1–186 (MSTDPDEREV…FGFTAHMDFY (186 aa)) are large ATPase domain (RuvB-L). Residues L25, R26, G67, K70, T71, S72, 133-135 (EDF), R176, Y186, and R223 contribute to the ATP site. T71 is a Mg(2+) binding site. Residues 187-257 (EPAELERVLV…VAKAALAVYD (71 aa)) are small ATPAse domain (RuvB-S). The head domain (RuvB-H) stretch occupies residues 260 to 345 (ELGLDRLDRA…AGANQPGLFE (86 aa)). DNA-binding residues include R315 and R320.

Belongs to the RuvB family. Homohexamer. Forms an RuvA(8)-RuvB(12)-Holliday junction (HJ) complex. HJ DNA is sandwiched between 2 RuvA tetramers; dsDNA enters through RuvA and exits via RuvB. An RuvB hexamer assembles on each DNA strand where it exits the tetramer. Each RuvB hexamer is contacted by two RuvA subunits (via domain III) on 2 adjacent RuvB subunits; this complex drives branch migration. In the full resolvosome a probable DNA-RuvA(4)-RuvB(12)-RuvC(2) complex forms which resolves the HJ.

Its subcellular location is the cytoplasm. The enzyme catalyses ATP + H2O = ADP + phosphate + H(+). The RuvA-RuvB-RuvC complex processes Holliday junction (HJ) DNA during genetic recombination and DNA repair, while the RuvA-RuvB complex plays an important role in the rescue of blocked DNA replication forks via replication fork reversal (RFR). RuvA specifically binds to HJ cruciform DNA, conferring on it an open structure. The RuvB hexamer acts as an ATP-dependent pump, pulling dsDNA into and through the RuvAB complex. RuvB forms 2 homohexamers on either side of HJ DNA bound by 1 or 2 RuvA tetramers; 4 subunits per hexamer contact DNA at a time. Coordinated motions by a converter formed by DNA-disengaged RuvB subunits stimulates ATP hydrolysis and nucleotide exchange. Immobilization of the converter enables RuvB to convert the ATP-contained energy into a lever motion, pulling 2 nucleotides of DNA out of the RuvA tetramer per ATP hydrolyzed, thus driving DNA branch migration. The RuvB motors rotate together with the DNA substrate, which together with the progressing nucleotide cycle form the mechanistic basis for DNA recombination by continuous HJ branch migration. Branch migration allows RuvC to scan DNA until it finds its consensus sequence, where it cleaves and resolves cruciform DNA. The polypeptide is Holliday junction branch migration complex subunit RuvB (Mycobacterium ulcerans (strain Agy99)).